The following is a 372-amino-acid chain: Putative 26S proteasome regulatory subunit homolog MTBMA_c13930 (372 aa).

Residue 164 to 171 (GSPGTGKT) participates in ATP binding.

This sequence belongs to the AAA ATPase family.

In terms of biological role, the 26S proteasome is involved in the ATP-dependent degradation of ubiquitinated proteins. The regulatory (or ATPase) complex confers ATP dependency and substrate specificity to the 26S complex. This chain is Putative 26S proteasome regulatory subunit homolog MTBMA_c13930, found in Methanothermobacter marburgensis (strain ATCC BAA-927 / DSM 2133 / JCM 14651 / NBRC 100331 / OCM 82 / Marburg) (Methanobacterium thermoautotrophicum).